Here is a 93-residue protein sequence, read N- to C-terminus: RNA-binding protein Hfq (93 aa).

Residues Asp-9–Ile-68 form the Sm domain. Residues His-70–Ala-81 show a composition bias toward low complexity. Residues His-70–Glu-93 are disordered.

It belongs to the Hfq family. Homohexamer.

Functionally, RNA chaperone that binds small regulatory RNA (sRNAs) and mRNAs to facilitate mRNA translational regulation in response to envelope stress, environmental stress and changes in metabolite concentrations. Also binds with high specificity to tRNAs. This Glaesserella parasuis serovar 5 (strain SH0165) (Haemophilus parasuis) protein is RNA-binding protein Hfq.